Reading from the N-terminus, the 37-residue chain is Photosystem I reaction center subunit VIII (37 aa).

A helical transmembrane segment spans residues 9 to 29; it reads SIFVPLVGLVFPAIAMASLFL.

This sequence belongs to the PsaI family.

The protein resides in the plastid. It is found in the chloroplast thylakoid membrane. In terms of biological role, may help in the organization of the PsaL subunit. This is Photosystem I reaction center subunit VIII from Cucumis sativus (Cucumber).